The primary structure comprises 328 residues: WUSCHEL-related homeobox 6 (328 aa).

Positions 1 to 11 are enriched in polar residues; sequence MEGSSNSPDRQ. The interval 1–45 is disordered; that stretch reads MEGSSNSPDRQSSGGSPPEERGGGGSGGGGGRSAAGEPVRSRWTP. The segment covering 23 to 33 has biased composition (gly residues); the sequence is GGGSGGGGGRS. A DNA-binding region (homeobox; WUS-type) is located at residues 38 to 102; it reads PVRSRWTPKP…NRRSRSRRRQ (65 aa).

This sequence belongs to the WUS homeobox family.

It is found in the nucleus. Functionally, transcription factor which may be involved in developmental processes. This chain is WUSCHEL-related homeobox 6 (WOX6), found in Oryza sativa subsp. japonica (Rice).